The sequence spans 106 residues: MDISKLMQQAKDMQGKMAAIQEDLAKKIITGSAGGGMVEVQVNGQGEILAIKIEDALINTDEKEMLQDLVTAATNDGLRRAKDLSKQEMGQLTGGMNLPDLTNFLS.

It belongs to the YbaB/EbfC family. Homodimer.

The protein resides in the cytoplasm. The protein localises to the nucleoid. Binds to DNA and alters its conformation. May be involved in regulation of gene expression, nucleoid organization and DNA protection. This is Nucleoid-associated protein DP1429 from Desulfotalea psychrophila (strain LSv54 / DSM 12343).